We begin with the raw amino-acid sequence, 496 residues long: Autophagy-related protein 21 (496 aa).

The WD 1 repeat unit spans residues 1–35 (MKVLQFNQDATCCVVAASSHQISIFNCDPFGKCFE). The segment at 41–86 (SKKKTSNNNGTASNSESRNNEESILITNGSRDRTDAEEEEDNEDNA) is disordered. A compositionally biased stretch (low complexity) spans 46-57 (SNNNGTASNSES). Positions 75 to 84 (DAEEEEDNED) are enriched in acidic residues. A WD 2 repeat occupies 148–190 (VMNRKRMCVLLESDQIFIYDISCMKPLETIDLWEDHYKRSQAN). Thr213 is subject to Phosphothreonine. A Phosphoserine modification is found at Ser237. WD repeat units lie at residues 294–334 (VHKG…DYMS), 346–385 (TRLCNLYQLAFDKSMTMIGCVGDTDTIHLFKLDDASNSLP), and 448–488 (VNES…GECV). Residues 342–346 (FRRGT) carry the L/FRRG motif motif.

It belongs to the WD repeat PROPPIN family.

The protein resides in the cytoplasm. The protein localises to the vacuole membrane. Its function is as follows. Required for cytoplasm to vacuole transport (Cvt) vesicles formation and mitophagy. Involved in binding of phosphatidylethanolamine to ATG8 and in recruitment of ATG8 and ATG5 to the pre-autophagosomal structure. Protects ATG8 from ARG4-mediated cleavage. Essential for maturation of proaminopeptidase I. The protein is Autophagy-related protein 21 (ATG21) of Saccharomyces cerevisiae (strain YJM789) (Baker's yeast).